A 677-amino-acid chain; its full sequence is MTQVAKKILVTCALPYANGSIHLGHMLEHIQADVWVRYQRMRGHEVNFICADDAHGTPIMLKAQQLGITPEQMIGEMSQEHQTDFAGFNISYDNYHSTHSEENRQLSELIYSRLKENGFIKNRTISQLYDPEKGMFLPDRFVKGTCPKCKSPDQYGDNCEVCGATYSPTELIEPKSVVSGATPVMRDSEHFFFDLPSFSEMLQAWTRSGALQEQVANKMQEWFESGLQQWDISRDAPYFGFEIPNAPGKYFYVWLDAPIGYMGSFKNLCDKRGDSVSFDEYWKKDSTAELYHFIGKDIVYFHSLFWPAMLEGSNFRKPTNLFVHGYVTVNGAKMSKSRGTFIKASTWLNHFDADSLRYYYTAKLSSRIDDIDLNLEDFVQRVNADIVNKVVNLASRNAGFINKRFDGVLASELADPQLYKTFTDAAEVIGEAWESREFGKAVREIMALADLANRYVDEQAPWVVAKQEGRDADLQAICSMGINLFRVLMTYLKPVLPKLTERAEAFLNTELTWDGIQQPLLGHKVNPFKALYNRIDMKQVEALVEASKEEVKATTAPVTGPLADDPIQETITFDDFAKVDLRVALIENAEFVEGSDKLLRLTLDLGGEKRNVFSGIRSAYPDPQALIGRHTIMVANLAPRKMRFGISEGMVMAAGPGGKDIFLLSPDAGAKPGHQVK.

The 'HIGH' region signature appears at 15–25 (PYANGSIHLGH). Zn(2+) is bound by residues cysteine 146, cysteine 149, cysteine 159, and cysteine 162. The short motif at 333-337 (KMSKS) is the 'KMSKS' region element. ATP is bound at residue lysine 336. One can recognise a tRNA-binding domain in the interval 575–677 (DFAKVDLRVA…AGAKPGHQVK (103 aa)).

Belongs to the class-I aminoacyl-tRNA synthetase family. MetG type 1 subfamily. In terms of assembly, homodimer. Zn(2+) serves as cofactor.

Its subcellular location is the cytoplasm. It catalyses the reaction tRNA(Met) + L-methionine + ATP = L-methionyl-tRNA(Met) + AMP + diphosphate. In terms of biological role, is required not only for elongation of protein synthesis but also for the initiation of all mRNA translation through initiator tRNA(fMet) aminoacylation. This chain is Methionine--tRNA ligase, found in Escherichia fergusonii (strain ATCC 35469 / DSM 13698 / CCUG 18766 / IAM 14443 / JCM 21226 / LMG 7866 / NBRC 102419 / NCTC 12128 / CDC 0568-73).